The following is a 102-amino-acid chain: Small ribosomal subunit protein uS10 (102 aa).

It belongs to the universal ribosomal protein uS10 family. Part of the 30S ribosomal subunit.

Functionally, involved in the binding of tRNA to the ribosomes. In Pseudothermotoga lettingae (strain ATCC BAA-301 / DSM 14385 / NBRC 107922 / TMO) (Thermotoga lettingae), this protein is Small ribosomal subunit protein uS10.